Reading from the N-terminus, the 375-residue chain is Tyrosine--tRNA ligase (375 aa).

Positions 37, 168, 172, 175, and 190 each coordinate L-tyrosine. Positions 251–255 (KMSKS) match the 'KMSKS' region motif. K254 contributes to the ATP binding site.

Belongs to the class-I aminoacyl-tRNA synthetase family. TyrS type 4 subfamily. Homodimer.

The protein localises to the cytoplasm. It catalyses the reaction tRNA(Tyr) + L-tyrosine + ATP = L-tyrosyl-tRNA(Tyr) + AMP + diphosphate + H(+). Its function is as follows. Catalyzes the attachment of tyrosine to tRNA(Tyr) in a two-step reaction: tyrosine is first activated by ATP to form Tyr-AMP and then transferred to the acceptor end of tRNA(Tyr). This Pyrococcus horikoshii (strain ATCC 700860 / DSM 12428 / JCM 9974 / NBRC 100139 / OT-3) protein is Tyrosine--tRNA ligase.